A 97-amino-acid polypeptide reads, in one-letter code: Putative pterin-4-alpha-carbinolamine dehydratase (97 aa).

This sequence belongs to the pterin-4-alpha-carbinolamine dehydratase family.

It catalyses the reaction (4aS,6R)-4a-hydroxy-L-erythro-5,6,7,8-tetrahydrobiopterin = (6R)-L-erythro-6,7-dihydrobiopterin + H2O. The sequence is that of Putative pterin-4-alpha-carbinolamine dehydratase from Ruegeria pomeroyi (strain ATCC 700808 / DSM 15171 / DSS-3) (Silicibacter pomeroyi).